Here is a 223-residue protein sequence, read N- to C-terminus: Ras-related protein Rab-37 (223 aa).

The segment at M1–S23 is disordered. Position 2 is an N-acetylthreonine (T2). GTP is bound by residues T38, G39, V40, G41, K42, T43, C44, and T62. T43 is a Mg(2+) binding site. 2 short sequence motifs (switch) span residues G52–F67 and D85–D102. Mg(2+) contacts are provided by T62 and D85. 8 residues coordinate GTP: G88, N143, K144, D146, M147, S173, A174, and K175. 2 S-geranylgeranyl cysteine lipidation sites follow: C219 and C220. A Cysteine methyl ester modification is found at C220. Positions S221–M223 are cleaved as a propeptide — removed in mature form.

This sequence belongs to the small GTPase superfamily. Rab family. As to quaternary structure, interacts with RIMS1. Interacts (in GDP-bound form) with RPGR, RPGR functions as guanine exchange factor (GEF). Requires Mg(2+) as cofactor.

The protein localises to the cytoplasmic vesicle. Its subcellular location is the cell projection. It is found in the cilium. The catalysed reaction is GTP + H2O = GDP + phosphate + H(+). Its activity is regulated as follows. Regulated by guanine nucleotide exchange factors (GEFs) including RPGR which promote the exchange of bound GDP for free GTP. Regulated by GTPase activating proteins (GAPs) which increase the GTP hydrolysis activity. Inhibited by GDP dissociation inhibitors (GDIs). The small GTPases Rab are key regulators of intracellular membrane trafficking, from the formation of transport vesicles to their fusion with membranes. Rabs cycle between an inactive GDP-bound form and an active GTP-bound form that is able to recruit to membranes different sets of downstream effectors directly responsible for vesicle formation, movement, tethering and fusion. Acts as an organizer for autophagosome biogenesis in a GTP-dependent manner. Involved in retinal homeostasis by autophagy regulation. This is Ras-related protein Rab-37 from Homo sapiens (Human).